Consider the following 373-residue polypeptide: Carboxylesterase/phospholipase LipF (373 aa).

Residues His-116–Gly-118 carry the Involved in the stabilization of the negatively charged intermediate by the formation of the oxyanion hole motif. Residues Ser-186, Glu-285, and His-315 contribute to the active site.

The protein belongs to the 'GDXG' lipolytic enzyme family.

It catalyses the reaction a carboxylic ester + H2O = an alcohol + a carboxylate + H(+). It carries out the reaction a 1,2-diacyl-sn-glycero-3-phosphocholine + H2O = phosphocholine + a 1,2-diacyl-sn-glycerol + H(+). In terms of biological role, a short-chain esterase and phospholipase. This Mycobacterium tuberculosis (strain CDC 1551 / Oshkosh) protein is Carboxylesterase/phospholipase LipF.